The sequence spans 467 residues: Gustatory and odorant receptor 22 (467 aa).

Residues 1–106 (MIHTQMEDAQ…MPRTTFTWCS (106 aa)) are Cytoplasmic-facing. A helical membrane pass occupies residues 107-127 (KAFLWAYFIYACETVIVLVVA). Residues 128-144 (RERINKFISTSDKRFDE) lie on the Extracellular side of the membrane. The helical transmembrane segment at 145–165 (VIYNIIFMSIMVPHFLLPVAS) threads the bilayer. Residues 166 to 198 (WRNGSEVAKFKNMWTDFQYKYLIVTGKPIVFPK) lie on the Cytoplasmic side of the membrane. The chain crosses the membrane as a helical span at residues 199–219 (LYPITWTLCIVSWSLSLVIIL). Residues 220–238 (SQYYLQPDFQFCHTFAYYH) lie on the Extracellular side of the membrane. Residues 239-259 (IIAMLNGFCSLWFVNCTAFGT) form a helical membrane-spanning segment. The Cytoplasmic portion of the chain corresponds to 260–304 (ASKAFAKELTDVLATERPAAKLTEYRHLWVDLSHMMQQLGKAYSN). A helical membrane pass occupies residues 305 to 325 (MYGIYCLVIFFTTIIATYGSL). Residues 326-337 (SEIIEHGATYKE) lie on the Extracellular side of the membrane. The helical transmembrane segment at 338–358 (VGLFVIVFYCMSLLFIICNEA) threads the bilayer. The Cytoplasmic segment spans residues 359–414 (HHASKRVGLNFQERLLNVNLTAVDKATQKEVEMFLVAIDKNPPTMNLDGYANINRG). A helical membrane pass occupies residues 415–435 (LITSNISFMATYLVVLMQFKL). Residues 436-467 (TLLRQSAKNAFISALKANLSRIRSLDADKVNT) are Extracellular-facing. Asn453 carries an N-linked (GlcNAc...) asparagine glycan.

This sequence belongs to the insect chemoreceptor superfamily. Gustatory receptor (GR) family. Gr21a subfamily. As to expression, carbon dioxide-responsive neurons coexpress GPRgr22 and GPRgr24 in the maxillary palp at both larval and adult life stages.

It is found in the cell membrane. Functionally, gustatory receptor which mediates acceptance or avoidance behavior, depending on its substrates. GPRgr22 and GPRgr24 together are sufficient for olfactory carbon dioxide-chemosensation. This Anopheles gambiae (African malaria mosquito) protein is Gustatory and odorant receptor 22.